Consider the following 209-residue polypeptide: Ferritin heavy chain (209 aa).

The N-terminal stretch at 1 to 27 (MMKSVFFGVVAITVAILSIYQETAQAQ) is a signal peptide. Residues 40–193 (DSVDDQCLAA…EKIATLKKMK (154 aa)) form the Ferritin-like diiron domain. 5 residues coordinate Fe cation: Glu-57, Glu-92, His-95, Glu-140, and Gln-175.

Belongs to the ferritin family. As to quaternary structure, oligomer of 24 subunits. There are two types of subunits: L (light) chain and H (heavy) chain. The functional molecule forms a roughly spherical shell with a diameter of 12 nm and contains a central cavity into which the insoluble mineral iron core is deposited.

The protein resides in the secreted. The protein localises to the cytoplasm. It catalyses the reaction 4 Fe(2+) + O2 + 4 H(+) = 4 Fe(3+) + 2 H2O. Stores iron in a soluble, non-toxic, readily available form. Important for iron homeostasis. Has ferroxidase activity. Iron is taken up in the ferrous form and deposited as ferric hydroxides after oxidation. The chain is Ferritin heavy chain (FERH) from Aedes aegypti (Yellowfever mosquito).